The following is a 269-amino-acid chain: Glutamate racemase (269 aa).

Residues 13–14 (DS) and 45–46 (YS) each bind substrate. The active-site Proton donor/acceptor is cysteine 77. 78-79 (NT) is a substrate binding site. Cysteine 188 acts as the Proton donor/acceptor in catalysis. 189–190 (TH) lines the substrate pocket.

This sequence belongs to the aspartate/glutamate racemases family.

The catalysed reaction is L-glutamate = D-glutamate. Its pathway is cell wall biogenesis; peptidoglycan biosynthesis. Provides the (R)-glutamate required for cell wall biosynthesis. The sequence is that of Glutamate racemase from Pasteurella multocida (strain Pm70).